Here is a 471-residue protein sequence, read N- to C-terminus: 1,3-beta-glucanosyltransferase GAS4 (471 aa).

The N-terminal stretch at 1–21 (MMVFSSTFIFLILELVVLCEA) is a signal peptide. Cys-70 and Cys-99 form a disulfide bridge. Position 88 (Tyr-88) interacts with (1,3-beta-D-glucosyl)n. Residue Asn-151 is glycosylated (N-linked (GlcNAc...) asparagine). Asn-160, Glu-161, Asp-203, and Arg-208 together coordinate (1,3-beta-D-glucosyl)n. Glu-161 acts as the Proton donor in catalysis. Intrachain disulfides connect Cys-217/Cys-354 and Cys-238/Cys-269. Catalysis depends on Glu-266, which acts as the Nucleophile. Residue Tyr-298 participates in (1,3-beta-D-glucosyl)n binding. Asn-398 carries N-linked (GlcNAc...) asparagine glycosylation. The GPI-anchor amidated asparagine moiety is linked to residue Asn-447. A propeptide spans 448–471 (SASISGPLLPLGLCLLFFTFSLFF) (removed in mature form).

This sequence belongs to the glycosyl hydrolase 72 family.

The protein resides in the cell membrane. In terms of biological role, splits internally a 1,3-beta-glucan molecule and transfers the newly generated reducing end (the donor) to the non-reducing end of another 1,3-beta-glucan molecule (the acceptor) forming a 1,3-beta linkage, resulting in the elongation of 1,3-beta-glucan chains in the cell wall. Involved in spore wall assembly. The chain is 1,3-beta-glucanosyltransferase GAS4 (GAS4) from Saccharomyces cerevisiae (strain ATCC 204508 / S288c) (Baker's yeast).